The sequence spans 626 residues: MHKEQDKKRLATLTLAALGVVYGDIGTSPLYSIKEVFGGAHHPVPITPDNVLGILSLFFWSLIIVVTLKYVSFIMRANNRGEGGIIALMTLAMHKGVAGSWQQKMLVLLGLFGAALFYGDGIITPAISVLSAVEGLEILTPAFKPYILPITLITLIGLFIFQRRGTASVGALFGPVMVIWFAVIAVLGAAAIVENPAVLAAVNPVHAFHFLTGNSLLGFFALGAVVLCITGGEALYADMGHFGAKPIQYAWLGYVLPALLLNYFGQGALLLADPSSVENPFYLLAPEWGRYPLVALATVATVIASQAVISGAFSITQQAIQLGYTPRLEIQHTSDEEIGQIYLPAINWMMLIAIIALVIEFGSSSNLAAAYGIAVTGTMLITNILAIAVAVRLWNWSPARAMLGALPFICIDLGFFLANSVKIADGGWFPLAFGLAVFILLTTWKRGRELLGLRLAADAMQLKSFVVDIAGSGIGRVPGTAIFMTPDPELVPHAMLHSLKHYKALHEQVVVMSVKVFDVPYVPDVDRVEVHRLSNNFSQVVVQYGFKDDPDIPAALALCGEAGLAIEPMDTSFFLGRETLIPKLGSEMAYWRELLFVAMFRNAGSATAFFKIPSNRVVELGSQVVL.

The next 12 membrane-spanning stretches (helical) occupy residues 10–30, 51–71, 107–127, 141–161, 173–193, 216–236, 251–271, 293–313, 341–361, 371–391, 401–421, and 423–443; these read LATL…TSPL, VLGI…LKYV, VLLG…TPAI, PAFK…LFIF, FGPV…AAIV, LLGF…EALY, WLGY…ALLL, LVAL…SGAF, IYLP…VIEF, YGIA…AVAV, AMLG…ANSV, and IADG…LLTT.

The protein belongs to the HAK/KUP transporter (TC 2.A.72) family.

It is found in the cell inner membrane. The enzyme catalyses K(+)(in) + H(+)(in) = K(+)(out) + H(+)(out). Functionally, transport of potassium into the cell. Likely operates as a K(+):H(+) symporter. The sequence is that of Probable potassium transport system protein Kup 3 from Dechloromonas aromatica (strain RCB).